The primary structure comprises 380 residues: MANLRKTHPLLKIANDALVDLPAPSNISIWWNFGSLLGLCLAIQLLTGLFLAMHYTADIATAFSSVAHICRDVNFGWLIRNMHANGASFFFICIYLHIGRGLYYGSYMFKETWNVGVVLLLLVMMTAFVGYVLPWGQMSFWGATVITNLLSAVPYVGNTLVQWIWGGFSVDNATLTRFFAFHFLLPFVIAAATLLHLLFLHETGSNNPVGLNPNADKIPFHPYFTYKDLLGFIVLFLALASLALFSPNYLGDPDNFTPANPLVTPPHIKPEWYFLFAYAILRSIPNKLGGVLALLASILILMLVPILHTSKHRSLTFRPFSQIIFWTLVADVAILTWIGGMPVEDPYIIIGQIASALYFLIFLVFFPLSGWLENKLLGLS.

A run of 4 helical transmembrane segments spans residues 33–53 (FGSL…FLAM), 77–98 (WLIR…YLHI), 113–133 (WNVG…GYVL), and 178–198 (FFAF…LHLL). Heme b-binding residues include H83 and H97. Heme b is bound by residues H182 and H196. Residue H201 coordinates a ubiquinone. A run of 4 helical transmembrane segments spans residues 226–246 (YKDL…ALFS), 288–308 (LGGV…PILH), 320–340 (FSQI…WIGG), and 347–367 (YIII…VFFP).

The protein belongs to the cytochrome b family. In terms of assembly, the cytochrome bc1 complex contains 3 respiratory subunits (MT-CYB, CYC1 and UQCRFS1), 2 core proteins (UQCRC1 and UQCRC2) and probably 6 low-molecular weight proteins. It depends on heme b as a cofactor.

The protein resides in the mitochondrion inner membrane. Functionally, component of the ubiquinol-cytochrome c reductase complex (complex III or cytochrome b-c1 complex) that is part of the mitochondrial respiratory chain. The b-c1 complex mediates electron transfer from ubiquinol to cytochrome c. Contributes to the generation of a proton gradient across the mitochondrial membrane that is then used for ATP synthesis. This Apogon semilineatus (Half-lined cardinal) protein is Cytochrome b (mt-cyb).